The chain runs to 143 residues: Large ribosomal subunit protein uL11 (143 aa).

It belongs to the universal ribosomal protein uL11 family. As to quaternary structure, part of the ribosomal stalk of the 50S ribosomal subunit. Interacts with L10 and the large rRNA to form the base of the stalk. L10 forms an elongated spine to which L12 dimers bind in a sequential fashion forming a multimeric L10(L12)X complex. In terms of processing, one or more lysine residues are methylated.

Functionally, forms part of the ribosomal stalk which helps the ribosome interact with GTP-bound translation factors. The protein is Large ribosomal subunit protein uL11 of Thioalkalivibrio sulfidiphilus (strain HL-EbGR7).